We begin with the raw amino-acid sequence, 368 residues long: GTPase Obg (368 aa).

The region spanning Met1 to Leu161 is the Obg domain. The 176-residue stretch at Ala162–Asp337 folds into the OBG-type G domain. Residues Gly168–Ser175, Phe193–Ile197, Asp217–Gly220, Asn290–Asp293, and Ser318–Leu320 each bind GTP. The Mg(2+) site is built by Ser175 and Thr195.

This sequence belongs to the TRAFAC class OBG-HflX-like GTPase superfamily. OBG GTPase family. Monomer. It depends on Mg(2+) as a cofactor.

Its subcellular location is the cytoplasm. Functionally, an essential GTPase which binds GTP, GDP and possibly (p)ppGpp with moderate affinity, with high nucleotide exchange rates and a fairly low GTP hydrolysis rate. Plays a role in control of the cell cycle, stress response, ribosome biogenesis and in those bacteria that undergo differentiation, in morphogenesis control. In Nitratidesulfovibrio vulgaris (strain DSM 19637 / Miyazaki F) (Desulfovibrio vulgaris), this protein is GTPase Obg.